The primary structure comprises 262 residues: 5'-nucleotidase SurE (262 aa).

A divalent metal cation contacts are provided by aspartate 8, aspartate 9, serine 39, and asparagine 95.

This sequence belongs to the SurE nucleotidase family. Requires a divalent metal cation as cofactor.

Its subcellular location is the cytoplasm. It carries out the reaction a ribonucleoside 5'-phosphate + H2O = a ribonucleoside + phosphate. Nucleotidase that shows phosphatase activity on nucleoside 5'-monophosphates. This chain is 5'-nucleotidase SurE, found in Methanothermobacter thermautotrophicus (strain ATCC 29096 / DSM 1053 / JCM 10044 / NBRC 100330 / Delta H) (Methanobacterium thermoautotrophicum).